Here is a 215-residue protein sequence, read N- to C-terminus: Probable GTP-binding protein EngB (215 aa).

In terms of domain architecture, EngB-type G spans 30 to 204 (EGLEVAFAGR…QMVLAQWLGL (175 aa)). GTP-binding positions include 38–45 (GRSNAGKS), 64–68 (GRTQL), 82–85 (DLPG), 149–152 (TKAD), and 182–185 (LFSA). Residues Ser-45 and Thr-66 each contribute to the Mg(2+) site.

The protein belongs to the TRAFAC class TrmE-Era-EngA-EngB-Septin-like GTPase superfamily. EngB GTPase family. Mg(2+) serves as cofactor.

Necessary for normal cell division and for the maintenance of normal septation. In Pseudomonas aeruginosa (strain ATCC 15692 / DSM 22644 / CIP 104116 / JCM 14847 / LMG 12228 / 1C / PRS 101 / PAO1), this protein is Probable GTP-binding protein EngB.